The primary structure comprises 340 residues: Guanine nucleotide-binding protein G(I)/G(S)/G(T) subunit beta-1 (340 aa).

N-acetylserine is present on Ser-2. Residue Ser-2 is modified to Phosphoserine. 7 WD repeats span residues Arg-46–Pro-94, Leu-95–Ala-140, Gly-141–Thr-181, Gly-182–Thr-223, Gly-224–Asp-267, Asn-268–Ala-309, and Gly-310–Asn-340. Phosphohistidine is present on His-266.

Belongs to the WD repeat G protein beta family. As to quaternary structure, g proteins are composed of 3 units, alpha, beta and gamma. The heterodimer formed by GNB1 and GNG2 interacts with ARHGEF5. The heterodimer formed by GNB1 and GNG2 interacts with GRK2. Forms a complex with GNAO1 and GNG3. Interacts with ARHGEF18 and RASD2. Forms complexes with TAS2R14 and G-proteins; these complexes play a role in the perception of bitterness. Component of the TAS2R14-GNAI1 complex, consisting of TAS2R14, GNAI1, GNB1 and GNG2. Component of the TAS2R14-GNAT3 complex, consisting of TAS2R14, GNAT3, GNB1 and GNG2. Component of the TAS2R14-GNAS2 complex, consisting of TAS2R14, GNAS2, GNB1 and GNG2. Phosphorylation at His-266 by NDKB contributes to G protein activation by increasing the high energetic phosphate transfer onto GDP.

Functionally, guanine nucleotide-binding proteins (G proteins) are involved as a modulator or transducer in various transmembrane signaling systems. The beta and gamma chains are required for the GTPase activity, for replacement of GDP by GTP, and for G protein-effector interaction. This is Guanine nucleotide-binding protein G(I)/G(S)/G(T) subunit beta-1 (GNB1) from Pongo abelii (Sumatran orangutan).